The primary structure comprises 385 residues: Cytochrome b (385 aa).

4 consecutive transmembrane segments (helical) span residues 34-54 (FGSILGLCLFLQIATGLILTM), 78-99 (WFIRNFHITGASLFFSCMFIHI), 114-134 (WYSGVILFICAMVTAFFGYVL), and 179-199 (FLVLHFLVPFLMIAVSLTHLL). Residues His84 and His98 each contribute to the heme b site. 2 residues coordinate heme b: His183 and His197. Residue His202 coordinates a ubiquinone. 4 consecutive transmembrane segments (helical) span residues 227 to 247 (FKDILGFLITLSLIFLGSTLF), 289 to 309 (LMGVFALIMSLSVLLFMPFLI), 321 to 341 (FMQFTFWLMISNFILLSWLGA), and 348 to 368 (YTIMSQVTSFLYFFIFLFLFP).

The protein belongs to the cytochrome b family. As to quaternary structure, the cytochrome bc1 complex contains 3 respiratory subunits (MT-CYB, CYC1 and UQCRFS1), 2 core proteins (UQCRC1 and UQCRC2) and probably 6 low-molecular weight proteins. It depends on heme b as a cofactor.

It is found in the mitochondrion inner membrane. Component of the ubiquinol-cytochrome c reductase complex (complex III or cytochrome b-c1 complex) that is part of the mitochondrial respiratory chain. The b-c1 complex mediates electron transfer from ubiquinol to cytochrome c. Contributes to the generation of a proton gradient across the mitochondrial membrane that is then used for ATP synthesis. This is Cytochrome b (MT-CYB) from Myxine glutinosa (Atlantic hagfish).